Reading from the N-terminus, the 209-residue chain is dITP/XTP pyrophosphatase (209 aa).

Residue 7 to 12 coordinates substrate; it reads SSHGYK. Catalysis depends on Asp70, which acts as the Proton acceptor. Asp70 serves as a coordination point for Mg(2+). Substrate is bound by residues Ser71, 154-157, Lys177, and 182-183; these read FGYD and HR.

This sequence belongs to the HAM1 NTPase family. As to quaternary structure, homodimer. Mg(2+) serves as cofactor.

It carries out the reaction XTP + H2O = XMP + diphosphate + H(+). The catalysed reaction is dITP + H2O = dIMP + diphosphate + H(+). It catalyses the reaction ITP + H2O = IMP + diphosphate + H(+). In terms of biological role, pyrophosphatase that catalyzes the hydrolysis of nucleoside triphosphates to their monophosphate derivatives, with a high preference for the non-canonical purine nucleotides XTP (xanthosine triphosphate), dITP (deoxyinosine triphosphate) and ITP. Seems to function as a house-cleaning enzyme that removes non-canonical purine nucleotides from the nucleotide pool, thus preventing their incorporation into DNA/RNA and avoiding chromosomal lesions. The chain is dITP/XTP pyrophosphatase from Chlamydia muridarum (strain MoPn / Nigg).